Reading from the N-terminus, the 928-residue chain is Isoleucine--tRNA ligase (928 aa).

The 'HIGH' region signature appears at proline 57–histidine 67. Glutamate 552 contributes to the L-isoleucyl-5'-AMP binding site. The 'KMSKS' region motif lies at lysine 593 to serine 597. Position 596 (lysine 596) interacts with ATP. Residues cysteine 887, cysteine 890, cysteine 907, and cysteine 910 each coordinate Zn(2+).

The protein belongs to the class-I aminoacyl-tRNA synthetase family. IleS type 1 subfamily. In terms of assembly, monomer. It depends on Zn(2+) as a cofactor.

The protein resides in the cytoplasm. It catalyses the reaction tRNA(Ile) + L-isoleucine + ATP = L-isoleucyl-tRNA(Ile) + AMP + diphosphate. In terms of biological role, catalyzes the attachment of isoleucine to tRNA(Ile). As IleRS can inadvertently accommodate and process structurally similar amino acids such as valine, to avoid such errors it has two additional distinct tRNA(Ile)-dependent editing activities. One activity is designated as 'pretransfer' editing and involves the hydrolysis of activated Val-AMP. The other activity is designated 'posttransfer' editing and involves deacylation of mischarged Val-tRNA(Ile). The sequence is that of Isoleucine--tRNA ligase from Latilactobacillus sakei subsp. sakei (strain 23K) (Lactobacillus sakei subsp. sakei).